The primary structure comprises 363 residues: MKVTLSVLKADIGSVGGHTLPSRKVLAKVEEVVREEVGRLLLDAYVFHIGDDIVLLLSHTRGVRNQEVHALAWKAFREGTEVARAEGLYGAGQDLLKDAFTGNLHGLGPQVAEMEFTERPAEPFMVLAADKTEPGAFNLPLYLAFADPMYSSGLLLSPELRPGFRFRIMDLAQTERDSYIELDAPERLYDIATLLRDSHRFAIESIWSRKHGEQAAVVSTTRLRNIAGRYVGKDDPVAIVRTQKIFPATEEFGPVFALAPYVAGDTRGSHHMPLMPVRANTPASTFFCVPMVCGLAFSLREGRLSEPVDLFADPVWEAVRAKVVEKAQEMRRQGFYGPAMLPMEELEYTGIAERLKALEREFS.

Catalysis depends on Asp-11, which acts as the Proton acceptor; for FBP phosphatase activity. The Mg(2+) site is built by Asp-11, His-18, Asp-51, and Asp-52. Residue His-18 participates in beta-D-fructose 1,6-bisphosphate binding. A dihydroxyacetone phosphate-binding site is contributed by His-18. Position 89 (Tyr-89) interacts with beta-D-fructose 1,6-bisphosphate. Gln-93 contributes to the Mg(2+) binding site. Beta-D-fructose 1,6-bisphosphate is bound at residue 102–103 (GN). Asp-130 contributes to the Mg(2+) binding site. Residue Lys-131 participates in beta-D-fructose 1,6-bisphosphate binding. Residue Lys-131 participates in dihydroxyacetone phosphate binding. The active-site Proton donor/acceptor; for FBP aldolase activity is Tyr-230. Positions 233, 234, and 235 each coordinate Mg(2+). Residue Lys-233 is the Schiff-base intermediate with DHAP; for FBP aldolase activity of the active site. Beta-D-fructose 1,6-bisphosphate is bound by residues 243-244 (QK), Arg-267, and Tyr-348. Residue Arg-267 coordinates dihydroxyacetone phosphate.

This sequence belongs to the FBP aldolase/phosphatase family. In terms of assembly, homooctamer; dimer of tetramers. The cofactor is Mg(2+).

It catalyses the reaction beta-D-fructose 1,6-bisphosphate + H2O = beta-D-fructose 6-phosphate + phosphate. The catalysed reaction is beta-D-fructose 1,6-bisphosphate = D-glyceraldehyde 3-phosphate + dihydroxyacetone phosphate. The protein operates within carbohydrate biosynthesis; gluconeogenesis. Catalyzes two subsequent steps in gluconeogenesis: the aldol condensation of dihydroxyacetone phosphate (DHAP) and glyceraldehyde-3-phosphate (GA3P) to fructose-1,6-bisphosphate (FBP), and the dephosphorylation of FBP to fructose-6-phosphate (F6P). The chain is Fructose-1,6-bisphosphate aldolase/phosphatase from Thermus thermophilus (strain ATCC BAA-163 / DSM 7039 / HB27).